We begin with the raw amino-acid sequence, 511 residues long: BAR/IMD domain-containing adapter protein 2-like 1 (511 aa).

In terms of domain architecture, IMD spans 1–249; the sequence is MSRGPEEVNR…MNMIEEIKTP (249 aa). A coiled-coil region spans residues 115-154; the sequence is MNATLKRYQTEHKNKLESLEKSQAELKKIRRKSQGSRNAL. Residues T248 and T257 each carry the phosphothreonine modification. Residues S261 and S281 each carry the phosphoserine modification. The disordered stretch occupies residues 302–328; that stretch reads NNPATAAPNSQRVNNSTGTSEDPSLQR. Over residues 303–328 the composition is skewed to polar residues; it reads NPATAAPNSQRVNNSTGTSEDPSLQR. Residues S331 and S354 each carry the phosphoserine modification. The SH3 domain occupies 339–402; that stretch reads MKKQKVKTIF…PSSYTKLLEE (64 aa). T412 is modified (phosphothreonine). Phosphoserine is present on residues S414, S420, and S422. The disordered stretch occupies residues 451-511; sequence RRADSARTTS…TNDRSAPIIR (61 aa). A binds F-actin region spans residues 483–511; that stretch reads PPFLSGENPFATVKLRPTVTNDRSAPIIR.

As to quaternary structure, interacts with RAC1. Binds to F-actin. Interacts with FASLG. Interacts (via SH3 domain) with E.coli effector protein EspF(U) (via PXXP motifs). Identified in a complex containing at least WASL, BAIAP2L1 and E.coli EspF(U). Interacts with E.coli intimin receptor Tir. In terms of processing, phosphorylated on tyrosine in response to insulin.

It is found in the cytoplasm. The protein resides in the cytoskeleton. Functionally, may function as adapter protein. Involved in the formation of clusters of actin bundles. Plays a role in the reorganization of the actin cytoskeleton in response to bacterial infection. In Homo sapiens (Human), this protein is BAR/IMD domain-containing adapter protein 2-like 1 (BAIAP2L1).